The primary structure comprises 226 residues: Clarin-3 (226 aa).

A helical membrane pass occupies residues 8–28 (LMFLSGFLTSLGSVVVICSIL). N-linked (GlcNAc...) asparagine glycosylation is present at Asn46. 3 consecutive transmembrane segments (helical) span residues 92 to 112 (VVILLLILSLAASVLSSVFTF), 128 to 148 (GVYTWNGLSASFVFLAMVLFV), and 181 to 201 (FWLTLHVIFLNIVTAVIIIFY).

Belongs to the clarin family.

Its subcellular location is the membrane. The chain is Clarin-3 (Clrn3) from Mus musculus (Mouse).